The primary structure comprises 417 residues: Bifunctional thiamine biosynthesis protein ThiDN (417 aa).

Residues 1–235 are hydroxymethylpyrimidine/phosphomethylpyrimidine kinase; that stretch reads MVILAIGGYD…KSKFGYNSNP (235 aa). Q41 serves as a coordination point for 4-amino-5-hydroxymethyl-2-methylpyrimidine. A thiamine-phosphate synthase region spans residues 236–417; it reads TYINKEKVIK…VIQKIYNTLM (182 aa).

It in the N-terminal section; belongs to the ThiD family. In the C-terminal section; belongs to the ThiN family.

The enzyme catalyses 4-amino-5-hydroxymethyl-2-methylpyrimidine + ATP = 4-amino-2-methyl-5-(phosphooxymethyl)pyrimidine + ADP + H(+). The catalysed reaction is 4-amino-2-methyl-5-(phosphooxymethyl)pyrimidine + ATP = 4-amino-2-methyl-5-(diphosphooxymethyl)pyrimidine + ADP. It catalyses the reaction 2-[(2R,5Z)-2-carboxy-4-methylthiazol-5(2H)-ylidene]ethyl phosphate + 4-amino-2-methyl-5-(diphosphooxymethyl)pyrimidine + 2 H(+) = thiamine phosphate + CO2 + diphosphate. It carries out the reaction 2-(2-carboxy-4-methylthiazol-5-yl)ethyl phosphate + 4-amino-2-methyl-5-(diphosphooxymethyl)pyrimidine + 2 H(+) = thiamine phosphate + CO2 + diphosphate. The enzyme catalyses 4-methyl-5-(2-phosphooxyethyl)-thiazole + 4-amino-2-methyl-5-(diphosphooxymethyl)pyrimidine + H(+) = thiamine phosphate + diphosphate. The protein operates within cofactor biosynthesis; thiamine diphosphate biosynthesis; 4-amino-2-methyl-5-diphosphomethylpyrimidine from 5-amino-1-(5-phospho-D-ribosyl)imidazole. It participates in cofactor biosynthesis; thiamine diphosphate biosynthesis; thiamine phosphate from 4-amino-2-methyl-5-diphosphomethylpyrimidine and 4-methyl-5-(2-phosphoethyl)-thiazole: step 1/1. Catalyzes the phosphorylation of hydroxymethylpyrimidine phosphate (HMP-P) to HMP-PP, and of HMP to HMP-P. Its function is as follows. Condenses 4-methyl-5-(beta-hydroxyethyl)thiazole monophosphate (THZ-P) and 4-amino-5-hydroxymethyl pyrimidine pyrophosphate (HMP-PP) to form thiamine monophosphate (TMP). The protein is Bifunctional thiamine biosynthesis protein ThiDN (thiDN) of Methanocaldococcus jannaschii (strain ATCC 43067 / DSM 2661 / JAL-1 / JCM 10045 / NBRC 100440) (Methanococcus jannaschii).